The sequence spans 183 residues: NADH-quinone oxidoreductase subunit B (183 aa).

Residues cysteine 60, cysteine 61, cysteine 125, and cysteine 154 each coordinate [4Fe-4S] cluster.

Belongs to the complex I 20 kDa subunit family. NDH-1 is composed of 14 different subunits. Subunits NuoB, C, D, E, F, and G constitute the peripheral sector of the complex. [4Fe-4S] cluster is required as a cofactor.

The protein localises to the cell inner membrane. The catalysed reaction is a quinone + NADH + 5 H(+)(in) = a quinol + NAD(+) + 4 H(+)(out). In terms of biological role, NDH-1 shuttles electrons from NADH, via FMN and iron-sulfur (Fe-S) centers, to quinones in the respiratory chain. The immediate electron acceptor for the enzyme in this species is believed to be ubiquinone. Couples the redox reaction to proton translocation (for every two electrons transferred, four hydrogen ions are translocated across the cytoplasmic membrane), and thus conserves the redox energy in a proton gradient. This chain is NADH-quinone oxidoreductase subunit B, found in Desulfovibrio desulfuricans (strain ATCC 27774 / DSM 6949 / MB).